Here is a 346-residue protein sequence, read N- to C-terminus: Histidinol-phosphate aminotransferase (346 aa).

The residue at position 209 (Lys209) is an N6-(pyridoxal phosphate)lysine.

This sequence belongs to the class-II pyridoxal-phosphate-dependent aminotransferase family. Histidinol-phosphate aminotransferase subfamily. In terms of assembly, homodimer. Requires pyridoxal 5'-phosphate as cofactor.

It carries out the reaction L-histidinol phosphate + 2-oxoglutarate = 3-(imidazol-4-yl)-2-oxopropyl phosphate + L-glutamate. It participates in amino-acid biosynthesis; L-histidine biosynthesis; L-histidine from 5-phospho-alpha-D-ribose 1-diphosphate: step 7/9. The polypeptide is Histidinol-phosphate aminotransferase (Vibrio cholerae serotype O1 (strain ATCC 39315 / El Tor Inaba N16961)).